A 247-amino-acid chain; its full sequence is Proteasome subunit alpha type-7 (247 aa).

This sequence belongs to the peptidase T1A family. The 26S proteasome consists of a 20S proteasome core and two 19S regulatory subunits. The 20S proteasome core is composed of 28 subunits that are arranged in four stacked rings, resulting in a barrel-shaped structure. The two end rings are each formed by seven alpha subunits, and the two central rings are each formed by seven beta subunits. The catalytic chamber with the active sites is on the inside of the barrel.

Its subcellular location is the cytoplasm. It is found in the nucleus. In terms of biological role, the proteasome is a multicatalytic proteinase complex which is characterized by its ability to cleave peptides with Arg, Phe, Tyr, Leu, and Glu adjacent to the leaving group at neutral or slightly basic pH. The proteasome has an ATP-dependent proteolytic activity. This Trypanosoma brucei brucei protein is Proteasome subunit alpha type-7 (PSA4).